Reading from the N-terminus, the 140-residue chain is Organic hydroperoxide resistance protein-like (140 aa).

Belongs to the OsmC/Ohr family.

This chain is Organic hydroperoxide resistance protein-like, found in Staphylococcus aureus (strain bovine RF122 / ET3-1).